We begin with the raw amino-acid sequence, 76 residues long: DNA-directed RNA polymerase subunit epsilon (76 aa).

This sequence belongs to the RNA polymerase subunit epsilon family. As to quaternary structure, RNAP is composed of a core of 2 alpha, a beta and a beta' subunit. The core is associated with a delta subunit, and at least one of epsilon or omega. When a sigma factor is associated with the core the holoenzyme is formed, which can initiate transcription.

It carries out the reaction RNA(n) + a ribonucleoside 5'-triphosphate = RNA(n+1) + diphosphate. In terms of biological role, a non-essential component of RNA polymerase (RNAP). The chain is DNA-directed RNA polymerase subunit epsilon from Streptococcus equi subsp. zooepidemicus (strain H70).